A 423-amino-acid chain; its full sequence is Ferrochelatase, mitochondrial (423 aa).

Residues 1–29 (MISRKIISTINSKTFYNKSLSYCTVNNNK) constitute a mitochondrion transit peptide. C173 lines the [2Fe-2S] cluster pocket. Residues H207 and D380 contribute to the active site. 3 residues coordinate [2Fe-2S] cluster: C401, C404, and C411.

Belongs to the ferrochelatase family. In terms of assembly, monomer. Requires [2Fe-2S] cluster as cofactor.

The protein resides in the mitochondrion inner membrane. The enzyme catalyses heme b + 2 H(+) = protoporphyrin IX + Fe(2+). It participates in porphyrin-containing compound metabolism; protoheme biosynthesis; protoheme from protoporphyrin-IX: step 1/1. Catalyzes the ferrous insertion into protoporphyrin IX. This chain is Ferrochelatase, mitochondrial (hemH), found in Dictyostelium discoideum (Social amoeba).